The primary structure comprises 374 residues: Queuine tRNA-ribosyltransferase (374 aa).

The active-site Proton acceptor is Asp95. Substrate contacts are provided by residues 95 to 99 (DSGGF), Asp149, Gln191, and Gly218. The RNA binding stretch occupies residues 249 to 255 (GVGTYRE). Asp268 functions as the Nucleophile in the catalytic mechanism. The segment at 273–277 (TRWAR) is RNA binding; important for wobble base 34 recognition. Positions 306, 308, 311, and 337 each coordinate Zn(2+).

It belongs to the queuine tRNA-ribosyltransferase family. As to quaternary structure, homodimer. Within each dimer, one monomer is responsible for RNA recognition and catalysis, while the other monomer binds to the replacement base PreQ1. It depends on Zn(2+) as a cofactor.

It carries out the reaction 7-aminomethyl-7-carbaguanine + guanosine(34) in tRNA = 7-aminomethyl-7-carbaguanosine(34) in tRNA + guanine. It participates in tRNA modification; tRNA-queuosine biosynthesis. Its function is as follows. Catalyzes the base-exchange of a guanine (G) residue with the queuine precursor 7-aminomethyl-7-deazaguanine (PreQ1) at position 34 (anticodon wobble position) in tRNAs with GU(N) anticodons (tRNA-Asp, -Asn, -His and -Tyr). Catalysis occurs through a double-displacement mechanism. The nucleophile active site attacks the C1' of nucleotide 34 to detach the guanine base from the RNA, forming a covalent enzyme-RNA intermediate. The proton acceptor active site deprotonates the incoming PreQ1, allowing a nucleophilic attack on the C1' of the ribose to form the product. After dissociation, two additional enzymatic reactions on the tRNA convert PreQ1 to queuine (Q), resulting in the hypermodified nucleoside queuosine (7-(((4,5-cis-dihydroxy-2-cyclopenten-1-yl)amino)methyl)-7-deazaguanosine). The polypeptide is Queuine tRNA-ribosyltransferase (Nostoc sp. (strain PCC 7120 / SAG 25.82 / UTEX 2576)).